A 946-amino-acid chain; its full sequence is MTDPEVFCFITKILCAHGGRMTLEELLGEISLPEAQLYELLKAAGPDRFVLLETGDQAGITRSVVATTRARVCRRKYCQRPCDSLHLCKLNLLGRCHYAQSQRNLCKYSHDVLSEQNFQVLKNHELSGLNQEELAVLLVQSDPFFMPEICKSYKGEGRKQICGQPQPCERLHICEHFTRGNCSYLNCLRSHNLMDRKVLAIMREHGLSSDVVQNIQDICNNKHTRRNPPSMRAPHPHRRGGAHRDRSKSRDRFHHNSLEVLSTVSPLGSGPPSPDVTGCKDPLEDVSADVTQKFKYLGTQDRAQLSSVSSKAAGVRGPSQMRASQEFLEDGDPDGLFSRNRSDSSTSRTSAAGFPLVAAQRNEAGAMKMGMPSGHHVEVKGKNEDIDRVPFLNSYIDGVTMEEATVSGILGKRATDNGLEEMILSSNHQKSVAKTQDPQTAGRITDSGQDTAFLHSKYEENPAWPGTSTHNGPNGFSQIMDETPNVSKSSPTGFGIKSAVTGGKEAVYSGVQSLRSHVLAMPGETTTPVQGSNRLPPSPLSSSTSHRVAASGSPGKSSTHASVSPASEPSRMMMMMSDPAEYSLCYIVNPVSPRMDDHGLKEICLDHLYRGCQQVNCNKNHFHLPYRWQLFILPTWMDFQDMEYIERAYCDPQIEIIVIEKHRINFKKMTCDSYPIRRLSTPSFVEKTLNSVFTTKWLWYWRNELNEYTQYGHESPSHTSSEINSAYLESFFHSCPRGVLQFHAGSQNYELSFQGMIQTNIASKTQRHVVRRPVFVSSKDVEQKRRGPDHQPVMPQADALTLFSSPQRNASTVSSNEYEFIELNNQDEEYAKISEQFKASMKQFKIVTIKRIWNQKLWDTFERKKQKMKNKTEMFLFHAVGRIHMDYICKNNFEWILHGNREIRYGKGLCWRRENCDSSHAHGFLEMPLASLGRTASLDSSGLQRK.

The interval 1–254 (MTDPEVFCFI…DRSKSRDRFH (254 aa)) is N-terminal domain. Positions 69–76 (RARVCRRK) match the Nuclear localization signal motif. 4 C3H1-type zinc fingers span residues 73 to 86 (CRRKYCQRPCDSLH), 87 to 113 (LCKLNLLGRCHYAQSQRNLCKYSHDVL), 150 to 172 (CKSYKGEGRKQICGQPQPCERLH), and 173 to 194 (ICEHFTRGNCSYLNCLRSHNLM). 2 disordered regions span residues 221–283 (NKHT…KDPL) and 302–354 (RAQL…AAGF). The interval 224-254 (TRRNPPSMRAPHPHRRGGAHRDRSKSRDRFH) is binding to EXOSC5. Basic and acidic residues predominate over residues 242–257 (AHRDRSKSRDRFHHNS). Ser257 carries the phosphoserine modification. Residue Ser262 is modified to Phosphoserine; by GSK3-beta. Phosphoserine occurs at positions 265, 269, and 273. Phosphothreonine is present on Thr277. Residues 283–290 (LEDVSADV) carry the Nuclear export signal motif. Residues Ser324 and Ser350 each carry the phosphoserine modification. The Nuclear localization signal signature appears at 412-413 (KR). Ser425 bears the Phosphoserine mark. The tract at residues 461–491 (NPAWPGTSTHNGPNGFSQIMDETPNVSKSSP) is disordered. Positions 466–477 (GTSTHNGPNGFS) are enriched in polar residues. Tyr508 bears the Phosphotyrosine mark. Positions 523 to 570 (GETTTPVQGSNRLPPSPLSSSTSHRVAASGSPGKSSTHASVSPASEPS) are disordered. Residues 524-533 (ETTTPVQGSN) are compositionally biased toward polar residues. Ser553 carries the phosphoserine modification. The segment covering 554–567 (PGKSSTHASVSPAS) has biased composition (polar residues). Phosphoserine occurs at positions 583 and 680. Positions 684-771 (FVEKTLNSVF…ASKTQRHVVR (88 aa)) constitute a WWE domain. Positions 805–946 (SPQRNASTVS…SLDSSGLQRK (142 aa)) constitute a PARP catalytic domain.

It belongs to the ARTD/PARP family. In terms of assembly, homodimer or homooligomer. Homooligomerization is essential for its antiviral activity. Interacts with EXOSC5. Interacts (via N-terminal domain) with DDX17 in an RNA-independent manner. Interacts with EXOSC3, EXOSC7, DCP2 and DCP1A. Interacts with PARN in an RNA-independent manner. Interacts with XRN1 in an RNA-dependent manner. Interacts (via N-terminal domain) with DHX30 (via N-terminus) in an RNA-independent manner. Isoform 2 interacts (via zinc-fingers) with RIGI in an RNA-dependent manner. Phosphorylation at Ser-273 is essential for sequential phosphorylation of Ser-269, Ser-265, Ser-262 and Ser-257 by GSK3-beta. Phosphorylation by GSK3-beta enhances its antiviral activity.

It is found in the cytoplasm. Its subcellular location is the nucleus. Its function is as follows. Antiviral protein which inhibits the replication of viruses by recruiting the cellular RNA degradation machineries to degrade the viral mRNAs. Binds to a ZAP-responsive element (ZRE) present in the target viral mRNA, recruits cellular poly(A)-specific ribonuclease PARN to remove the poly(A) tail, and the 3'-5' exoribonuclease complex exosome to degrade the RNA body from the 3'-end. It also recruits the decapping complex DCP1-DCP2 through RNA helicase p72 (DDX17) to remove the cap structure of the viral mRNA to initiate its degradation from the 5'-end. Its target viruses belong to families which include retroviridae: human immunodeficiency virus type 1 (HIV-1) and moloney and murine leukemia virus (MoMLV), filoviridae: ebola virus (EBOV) and marburg virus (MARV), togaviridae: sindbis virus (SINV) and Ross river virus (RRV). Specifically targets the multiply spliced but not unspliced or singly spliced HIV-1 mRNAs for degradation. Isoform 1 is a more potent viral inhibitor than isoform 2. Isoform 2 acts as a positive regulator of RIG-I signaling resulting in activation of the downstream effector IRF3 leading to the expression of type I IFNs and IFN stimulated genes (ISGs). The protein is Zinc finger CCCH-type antiviral protein 1 (Zc3hav1) of Mus musculus (Mouse).